We begin with the raw amino-acid sequence, 559 residues long: Cytokine-like nuclear factor N-PAC (559 aa).

Positions 9–70 (VNDLVWAKMK…ETQIKPYQEF (62 aa)) constitute a PWWP domain. A disordered region spans residues 106–137 (SEQDNRPDPDVEFNKLREGGTESGEETTVNNT). Residues 108-125 (QDNRPDPDVEFNKLREGG) are compositionally biased toward basic and acidic residues. The dehydrogenase domain stretch occupies residues 267–559 (RNIQASNLKF…SSAVYVRARF (293 aa)). NAD(+) is bound by residues 277–291 (GFLG…MVKN) and Lys511.

Belongs to the HIBADH-related family. NP60 subfamily. As to quaternary structure, binds to mononucleosomes.

The protein resides in the chromosome. Functionally, nucleosome-destabilizing factor that is recruited to genes during transcriptional activation and colocalizes with a subset of trimethylated 'Lys-36' histone H3 (H3K36me3)-enriched regions. The chain is Cytokine-like nuclear factor N-PAC from Aedes aegypti (Yellowfever mosquito).